The primary structure comprises 74 residues: MQTACWVMVMMMVWITAPLSEGGKLNDVIRGLVPDDVTPQLILRSLFFHRPSDSVVRPTVPVRICYWKVCPPSP.

Residues 1-22 (MQTACWVMVMMMVWITAPLSEG) form the signal peptide. Positions 23 to 57 (GKLNDVIRGLVPDDVTPQLILRSLFFHRPSDSVVR) are excised as a propeptide. A disulfide bond links Cys-65 and Cys-70. Trp-67 carries the post-translational modification D-tryptophan. 4-hydroxyproline occurs at positions 71, 72, and 74.

Belongs to the conotoxin C superfamily. Consomatin family. Expressed by the venom duct.

The protein localises to the secreted. Functionally, moderately activates human somatostatin receptors (SSTR) with a preferential activation of SSTR1 and SSTR4. In vivo, does not cause behavioral changes in mice within a few minutes of intracranial injection, but causes a progressive loss of movement thereafter. Four to five hours after injection, mice recover, even with the highest dose tested. Shows antinociception and antihyperalgesia activities in two mouse models of acute pain, most probably by acting outside the central nervous system. The chain is Consomatin Gh1 from Conus grahami (Cone snail).